The sequence spans 962 residues: Putative RNA Helicase B962L (962 aa).

In terms of domain architecture, Helicase ATP-binding spans 43-229 (IPTSLADRVL…FGIGKENIIL (187 aa)). Position 56-63 (56-63 (SRTGSGKS)) interacts with ATP. The DEAH box signature appears at 167-170 (DEAH). The Helicase C-terminal domain maps to 253–459 (ACETALTIHK…TIKKNKEGVF (207 aa)). A helical membrane pass occupies residues 521–541 (GYFWQAAISDIATILAVVSVA).

It belongs to the DEAD box helicase family. DEAH subfamily.

The protein localises to the host membrane. The protein resides in the virion. It catalyses the reaction ATP + H2O = ADP + phosphate + H(+). This African swine fever virus (isolate Tick/South Africa/Pretoriuskop Pr4/1996) (ASFV) protein is Putative RNA Helicase B962L.